A 346-amino-acid polypeptide reads, in one-letter code: Uroporphyrinogen decarboxylase (346 aa).

Substrate-binding positions include 26 to 30 (RQAGR), Asp76, Tyr153, Ser208, and His323.

It belongs to the uroporphyrinogen decarboxylase family. As to quaternary structure, homodimer.

Its subcellular location is the cytoplasm. The enzyme catalyses uroporphyrinogen III + 4 H(+) = coproporphyrinogen III + 4 CO2. The protein operates within porphyrin-containing compound metabolism; protoporphyrin-IX biosynthesis; coproporphyrinogen-III from 5-aminolevulinate: step 4/4. In terms of biological role, catalyzes the decarboxylation of four acetate groups of uroporphyrinogen-III to yield coproporphyrinogen-III. This Prochlorococcus marinus (strain MIT 9301) protein is Uroporphyrinogen decarboxylase.